Reading from the N-terminus, the 229-residue chain is Heptahelical transmembrane protein ADIPOR2 (229 aa).

Over 1–4 (MQGA) the chain is Cytoplasmic. The helical transmembrane segment at 5–25 (ASHDAAAAAAAAAVLGGGHGV) threads the bilayer. The Extracellular portion of the chain corresponds to 26–30 (PRWPR). Residues 31–51 (MVFLVGAMTCLAISATAHLLA) traverse the membrane as a helical segment. Residues 52–66 (CHSRRASVVFWQLDY) are Cytoplasmic-facing. The chain crosses the membrane as a helical span at residues 67 to 87 (AGISAMIVASFVPPVYYAFLC). Residues 88–92 (HRPAR) are Extracellular-facing. The chain crosses the membrane as a helical span at residues 93–113 (VAYLSAISALGALVVGALLSP). The Cytoplasmic portion of the chain corresponds to 114–124 (PCSSPRFRRLR). A helical transmembrane segment spans residues 125–145 (AALFLAMGLSGVVPALHALWL). Residues 146 to 153 (NWGHAACY) are Extracellular-facing. A helical membrane pass occupies residues 154–174 (LALSLEVAMGLAYAAGAWFYV). The Cytoplasmic portion of the chain corresponds to 175 to 194 (SRVPEKWRPGVFDVVGHSHQ). A helical membrane pass occupies residues 195–215 (IFHVLVLVGAVTHYVAVDVLL). Topologically, residues 216 to 229 (NWRETVAAACSATS) are extracellular.

The protein belongs to the ADIPOR family.

The protein localises to the membrane. May play a role in abiotic stress response. The sequence is that of Heptahelical transmembrane protein ADIPOR2 (ADIPOR2) from Oryza sativa subsp. japonica (Rice).